The sequence spans 295 residues: Lipoyl synthase (295 aa).

Cysteine 34, cysteine 39, cysteine 45, cysteine 60, cysteine 64, cysteine 67, and serine 273 together coordinate [4Fe-4S] cluster. A Radical SAM core domain is found at 46 to 262 (WNKRHATIMI…KLMAYAKGFS (217 aa)).

This sequence belongs to the radical SAM superfamily. Lipoyl synthase family. It depends on [4Fe-4S] cluster as a cofactor.

The protein localises to the cytoplasm. It catalyses the reaction [[Fe-S] cluster scaffold protein carrying a second [4Fe-4S](2+) cluster] + N(6)-octanoyl-L-lysyl-[protein] + 2 oxidized [2Fe-2S]-[ferredoxin] + 2 S-adenosyl-L-methionine + 4 H(+) = [[Fe-S] cluster scaffold protein] + N(6)-[(R)-dihydrolipoyl]-L-lysyl-[protein] + 4 Fe(3+) + 2 hydrogen sulfide + 2 5'-deoxyadenosine + 2 L-methionine + 2 reduced [2Fe-2S]-[ferredoxin]. Its pathway is protein modification; protein lipoylation via endogenous pathway; protein N(6)-(lipoyl)lysine from octanoyl-[acyl-carrier-protein]: step 2/2. Functionally, catalyzes the radical-mediated insertion of two sulfur atoms into the C-6 and C-8 positions of the octanoyl moiety bound to the lipoyl domains of lipoate-dependent enzymes, thereby converting the octanoylated domains into lipoylated derivatives. In Anaplasma marginale (strain St. Maries), this protein is Lipoyl synthase.